The chain runs to 196 residues: MASTDKPDRESIKSEEAPAAHPRRSNYSSVHVALRFLLFAASVTAVVVMVTAKQTKIVPVPGLPISVPLEAKFSDSPAFLYFISALSVAGLYGILTTLAAISIVLKPAYATRFLLHFALLDVLMLGIVASATGAAGGVAYVGLKGNSHVRWGKVCNVYDKFCQHVGSSIAVALFASVLLVLLTMLSVFSIYRKIPK.

The span at 1–18 (MASTDKPDRESIKSEEAP) shows a compositional bias: basic and acidic residues. A disordered region spans residues 1–22 (MASTDKPDRESIKSEEAPAAHP). At 1 to 29 (MASTDKPDRESIKSEEAPAAHPRRSNYSS) the chain is on the cytoplasmic side. Residues 30–50 (VHVALRFLLFAASVTAVVVMV) traverse the membrane as a helical segment. The Extracellular segment spans residues 51-84 (TAKQTKIVPVPGLPISVPLEAKFSDSPAFLYFIS). A helical membrane pass occupies residues 85–105 (ALSVAGLYGILTTLAAISIVL). The Cytoplasmic segment spans residues 106–112 (KPAYATR). Residues 113–133 (FLLHFALLDVLMLGIVASATG) traverse the membrane as a helical segment. The Extracellular segment spans residues 134–167 (AAGGVAYVGLKGNSHVRWGKVCNVYDKFCQHVGS). A helical membrane pass occupies residues 168-188 (SIAVALFASVLLVLLTMLSVF). The Cytoplasmic portion of the chain corresponds to 189–196 (SIYRKIPK).

Belongs to the Casparian strip membrane proteins (CASP) family. Homodimer and heterodimers.

It localises to the cell membrane. This is CASP-like protein 1D1 from Populus trichocarpa (Western balsam poplar).